Reading from the N-terminus, the 134-residue chain is D-dopachrome decarboxylase-like protein (134 aa).

It belongs to the MIF family.

Its subcellular location is the cytoplasm. May have lyase activity. This is D-dopachrome decarboxylase-like protein (DDTL) from Homo sapiens (Human).